The primary structure comprises 331 residues: UPF0324 membrane protein SAS0317 (331 aa).

The next 11 membrane-spanning stretches (helical) occupy residues 9 to 26, 31 to 48, 69 to 88, 93 to 115, 122 to 144, 154 to 176, 183 to 202, 217 to 234, 247 to 269, 273 to 295, and 308 to 330; these read FMIG…SFLA, ILDK…AILY, LLRF…DIIG, LLAI…NKLL, ALLL…APIF, SIGI…YAIF, YGAW…LAGG, LGRV…ILIM, ISIP…VTIP, LNIL…GLNV, and LMTI…HWLY.

The protein belongs to the UPF0324 family.

It is found in the cell membrane. The chain is UPF0324 membrane protein SAS0317 from Staphylococcus aureus (strain MSSA476).